The sequence spans 399 residues: Enoyl-[acyl-carrier-protein] reductase [NADH] (399 aa).

NAD(+) contacts are provided by residues 49–54, 75–76, 112–113, and 141–142; these read GASSGY, FE, DA, and LA. Tyr-227 provides a ligand contact to substrate. Catalysis depends on Tyr-237, which acts as the Proton donor. Residues Lys-246 and 272-274 contribute to the NAD(+) site; that span reads VVT.

Belongs to the TER reductase family. Monomer.

It catalyses the reaction a 2,3-saturated acyl-[ACP] + NAD(+) = a (2E)-enoyl-[ACP] + NADH + H(+). It functions in the pathway lipid metabolism; fatty acid biosynthesis. Functionally, involved in the final reduction of the elongation cycle of fatty acid synthesis (FAS II). Catalyzes the reduction of a carbon-carbon double bond in an enoyl moiety that is covalently linked to an acyl carrier protein (ACP). In Pseudomonas putida (strain W619), this protein is Enoyl-[acyl-carrier-protein] reductase [NADH].